The primary structure comprises 248 residues: NADH dehydrogenase [ubiquinone] flavoprotein 2, mitochondrial (248 aa).

A mitochondrion-targeting transit peptide spans 1-31; sequence MFSLALRARASGLTAQWGRHARNLHKTAVQN. Residues Cys-134, Cys-139, Cys-175, and Cys-179 each coordinate [2Fe-2S] cluster. At Tyr-192 the chain carries Phosphotyrosine; by SRC. The segment at 229-248 is disordered; the sequence is GLTSLTEPPKGPGFGVQAGL.

Belongs to the complex I 24 kDa subunit family. As to quaternary structure, core subunit of respiratory chain NADH dehydrogenase (Complex I) which is composed of 45 different subunits. This is a component of the flavoprotein-sulfur (FP) fragment of the enzyme. [2Fe-2S] cluster is required as a cofactor.

Its subcellular location is the mitochondrion inner membrane. It carries out the reaction a ubiquinone + NADH + 5 H(+)(in) = a ubiquinol + NAD(+) + 4 H(+)(out). Functionally, core subunit of the mitochondrial membrane respiratory chain NADH dehydrogenase (Complex I) which catalyzes electron transfer from NADH through the respiratory chain, using ubiquinone as an electron acceptor. Parts of the peripheral arm of the enzyme, where the electrons from NADH are accepted by flavin mononucleotide (FMN) and then passed along a chain of iron-sulfur clusters by electron tunnelling to the final acceptor ubiquinone. Contains one iron-sulfur cluster. The protein is NADH dehydrogenase [ubiquinone] flavoprotein 2, mitochondrial of Rattus norvegicus (Rat).